Consider the following 1178-residue polypeptide: Pyruvate carboxylase, mitochondrial (1178 aa).

A mitochondrion-targeting transit peptide spans 1-20 (MLKFQTVRGGLRLLGVRRSS). Ser-21 carries the post-translational modification Phosphoserine. N6-acetyllysine occurs at positions 35 and 39. The 451-residue stretch at 36–486 (PIKKVMVANR…DTQFIDENPE (451 aa)) folds into the Biotin carboxylation domain. Lys-79 is modified (N6-acetyllysine; alternate). Lys-79 is modified (N6-succinyllysine; alternate). An N6-acetyllysine mark is found at Lys-148 and Lys-152. Residues Lys-152 and Glu-236 each coordinate ATP. An ATP-grasp domain is found at 156–353 (RAIAIAAGVP…LVHAQIHVSE (198 aa)). Lys-241 bears the N6-acetyllysine mark. Residue His-271 coordinates ATP. Lys-297, Lys-316, and Lys-319 each carry N6-acetyllysine. The active site involves Arg-328. Lys-434 bears the N6-acetyllysine mark. Lys-442 is modified (N6-succinyllysine). A Pyruvate carboxyltransferase domain is found at 563 to 832 (LLLMDTTFRD…DTEVPLERVF (270 aa)). 571-575 (RDAHQ) is a substrate binding site. Asp-572 provides a ligand contact to Mn(2+). Lys-589 is subject to N6-acetyllysine. Arg-644 serves as a coordination point for substrate. 2 positions are modified to N6-acetyllysine: Lys-661 and Lys-717. Lys-741 provides a ligand contact to Mn(2+). Lys-741 is subject to N6-carboxylysine. Position 748 is an N6-acetyllysine (Lys-748). Residues His-771 and His-773 each coordinate Mn(2+). Lys-892 is modified (N6-acetyllysine). Thr-908 is a binding site for substrate. Lys-969 carries the N6-acetyllysine modification. The residue at position 988 (Lys-988) is an N6-acetyllysine; alternate. N6-succinyllysine; alternate is present on Lys-988. Lys-992 carries the N6-acetyllysine modification. The residue at position 1003 (Thr-1003) is a Phosphothreonine. Residues Lys-1061, Lys-1090, and Lys-1124 each carry the N6-acetyllysine modification. A Biotinyl-binding domain is found at 1109–1178 (KGQIGAPMPG…EGDDLILEIE (70 aa)). Lys-1144 bears the N6-biotinyllysine mark.

Homotetramer. Interacts (via the biotin carboxylation domain) with SIRT4. Biotin serves as cofactor. Requires Mn(2+) as cofactor. In terms of processing, acetylation of Lys-316 is observed in liver mitochondria from fasted mice but not from fed mice. Acetylation of Lys-748 might play a role in catalytic activity regulation. In terms of tissue distribution, liver, kidney, adipose tissue, liver and brain.

It localises to the mitochondrion matrix. It carries out the reaction hydrogencarbonate + pyruvate + ATP = oxaloacetate + ADP + phosphate + H(+). Its pathway is carbohydrate biosynthesis; gluconeogenesis. Pyruvate carboxylase catalyzes a 2-step reaction, involving the ATP-dependent carboxylation of the covalently attached biotin in the first step and the transfer of the carboxyl group to pyruvate in the second. Catalyzes in a tissue specific manner, the initial reactions of glucose (liver, kidney) and lipid (adipose tissue, liver, brain) synthesis from pyruvate. The chain is Pyruvate carboxylase, mitochondrial (Pc) from Mus musculus (Mouse).